The primary structure comprises 565 residues: Periplasmic trehalase (565 aa).

Positions M1–A30 are cleaved as a signal peptide. Substrate-binding positions include R152, W159–D160, N196, R205–Q207, R277–E279, and G310. Residues D312 and E496 each act as proton donor/acceptor in the active site. E511 contributes to the substrate binding site. The tract at residues C539 to P565 is disordered.

Belongs to the glycosyl hydrolase 37 family. Monomer.

The protein localises to the periplasm. The enzyme catalyses alpha,alpha-trehalose + H2O = alpha-D-glucose + beta-D-glucose. Its function is as follows. Provides the cells with the ability to utilize trehalose at high osmolarity by splitting it into glucose molecules that can subsequently be taken up by the phosphotransferase-mediated uptake system. The chain is Periplasmic trehalase from Escherichia coli O6:H1 (strain CFT073 / ATCC 700928 / UPEC).